The chain runs to 213 residues: Holliday junction branch migration complex subunit RuvA (213 aa).

Residues methionine 1 to alanine 63 are domain I. A domain II region spans residues aspartate 64–alanine 140. Residues alanine 140–alanine 144 form a flexible linker region. Residues alanine 145–glycine 213 are domain III.

It belongs to the RuvA family. In terms of assembly, homotetramer. Forms an RuvA(8)-RuvB(12)-Holliday junction (HJ) complex. HJ DNA is sandwiched between 2 RuvA tetramers; dsDNA enters through RuvA and exits via RuvB. An RuvB hexamer assembles on each DNA strand where it exits the tetramer. Each RuvB hexamer is contacted by two RuvA subunits (via domain III) on 2 adjacent RuvB subunits; this complex drives branch migration. In the full resolvosome a probable DNA-RuvA(4)-RuvB(12)-RuvC(2) complex forms which resolves the HJ.

It is found in the cytoplasm. Its function is as follows. The RuvA-RuvB-RuvC complex processes Holliday junction (HJ) DNA during genetic recombination and DNA repair, while the RuvA-RuvB complex plays an important role in the rescue of blocked DNA replication forks via replication fork reversal (RFR). RuvA specifically binds to HJ cruciform DNA, conferring on it an open structure. The RuvB hexamer acts as an ATP-dependent pump, pulling dsDNA into and through the RuvAB complex. HJ branch migration allows RuvC to scan DNA until it finds its consensus sequence, where it cleaves and resolves the cruciform DNA. This is Holliday junction branch migration complex subunit RuvA from Pseudarthrobacter chlorophenolicus (strain ATCC 700700 / DSM 12829 / CIP 107037 / JCM 12360 / KCTC 9906 / NCIMB 13794 / A6) (Arthrobacter chlorophenolicus).